Consider the following 87-residue polypeptide: Small ribosomal subunit protein uS15 (87 aa).

Belongs to the universal ribosomal protein uS15 family. Part of the 30S ribosomal subunit. Forms a bridge to the 50S subunit in the 70S ribosome, contacting the 23S rRNA.

In terms of biological role, one of the primary rRNA binding proteins, it binds directly to 16S rRNA where it helps nucleate assembly of the platform of the 30S subunit by binding and bridging several RNA helices of the 16S rRNA. Forms an intersubunit bridge (bridge B4) with the 23S rRNA of the 50S subunit in the ribosome. The chain is Small ribosomal subunit protein uS15 from Clostridium kluyveri (strain NBRC 12016).